We begin with the raw amino-acid sequence, 280 residues long: Ribonuclease Z (280 aa).

Zn(2+) contacts are provided by histidine 61, histidine 63, aspartate 65, histidine 66, histidine 153, aspartate 176, and histidine 240. The active-site Proton acceptor is the aspartate 65.

Belongs to the RNase Z family. As to quaternary structure, homodimer. The cofactor is Zn(2+).

It catalyses the reaction Endonucleolytic cleavage of RNA, removing extra 3' nucleotides from tRNA precursor, generating 3' termini of tRNAs. A 3'-hydroxy group is left at the tRNA terminus and a 5'-phosphoryl group is left at the trailer molecule.. Functionally, zinc phosphodiesterase, which displays some tRNA 3'-processing endonuclease activity. Probably involved in tRNA maturation, by removing a 3'-trailer from precursor tRNA. In Mycobacterium avium (strain 104), this protein is Ribonuclease Z.